Reading from the N-terminus, the 1086-residue chain is ATP-dependent helicase/deoxyribonuclease subunit B (1086 aa).

Belongs to the helicase family. AddB/RexB type 2 subfamily. As to quaternary structure, heterodimer of AddA and RexB. It depends on Mg(2+) as a cofactor.

Functionally, the heterodimer acts as both an ATP-dependent DNA helicase and an ATP-dependent, dual-direction single-stranded exonuclease. Recognizes the chi site generating a DNA molecule suitable for the initiation of homologous recombination. This subunit has 5' -&gt; 3' nuclease activity but not helicase activity. The polypeptide is ATP-dependent helicase/deoxyribonuclease subunit B (Streptococcus uberis (strain ATCC BAA-854 / 0140J)).